We begin with the raw amino-acid sequence, 427 residues long: 3-phosphoshikimate 1-carboxyvinyltransferase (427 aa).

3 residues coordinate 3-phosphoshikimate: lysine 22, serine 23, and arginine 27. Residue lysine 22 participates in phosphoenolpyruvate binding. 2 residues coordinate phosphoenolpyruvate: glycine 97 and arginine 125. 7 residues coordinate 3-phosphoshikimate: serine 171, serine 172, glutamine 173, serine 199, aspartate 315, asparagine 338, and lysine 342. Phosphoenolpyruvate is bound at residue glutamine 173. Aspartate 315 functions as the Proton acceptor in the catalytic mechanism. Positions 346, 388, and 413 each coordinate phosphoenolpyruvate.

The protein belongs to the EPSP synthase family. Monomer.

It is found in the cytoplasm. It catalyses the reaction 3-phosphoshikimate + phosphoenolpyruvate = 5-O-(1-carboxyvinyl)-3-phosphoshikimate + phosphate. It functions in the pathway metabolic intermediate biosynthesis; chorismate biosynthesis; chorismate from D-erythrose 4-phosphate and phosphoenolpyruvate: step 6/7. Catalyzes the transfer of the enolpyruvyl moiety of phosphoenolpyruvate (PEP) to the 5-hydroxyl of shikimate-3-phosphate (S3P) to produce enolpyruvyl shikimate-3-phosphate and inorganic phosphate. In Aliivibrio salmonicida (strain LFI1238) (Vibrio salmonicida (strain LFI1238)), this protein is 3-phosphoshikimate 1-carboxyvinyltransferase.